Here is a 145-residue protein sequence, read N- to C-terminus: D-aminoacyl-tRNA deacylase (145 aa).

Residues 137 to 138 (GP) carry the Gly-cisPro motif, important for rejection of L-amino acids motif.

This sequence belongs to the DTD family. In terms of assembly, homodimer.

The protein localises to the cytoplasm. It catalyses the reaction glycyl-tRNA(Ala) + H2O = tRNA(Ala) + glycine + H(+). The enzyme catalyses a D-aminoacyl-tRNA + H2O = a tRNA + a D-alpha-amino acid + H(+). An aminoacyl-tRNA editing enzyme that deacylates mischarged D-aminoacyl-tRNAs. Also deacylates mischarged glycyl-tRNA(Ala), protecting cells against glycine mischarging by AlaRS. Acts via tRNA-based rather than protein-based catalysis; rejects L-amino acids rather than detecting D-amino acids in the active site. By recycling D-aminoacyl-tRNA to D-amino acids and free tRNA molecules, this enzyme counteracts the toxicity associated with the formation of D-aminoacyl-tRNA entities in vivo and helps enforce protein L-homochirality. In Legionella pneumophila (strain Paris), this protein is D-aminoacyl-tRNA deacylase.